Here is a 404-residue protein sequence, read N- to C-terminus: Snake venom metalloproteinase H5 (404 aa).

A signal peptide spans 1–6 (FPYQGS). Residues 7–177 (SIMLESGKVN…KPSWVNLTPK (171 aa)) constitute a propeptide that is removed on maturation. Residues 184–379 (TSVNLQLVVD…KKPKCIHKKS (196 aa)) form the Peptidase M12B domain. 3 cysteine pairs are disulfide-bonded: C295–C374, C336–C358, and C338–C341. H320 contributes to the Zn(2+) binding site. Residue E321 is part of the active site. Zn(2+) is bound by residues H324 and H330. Residues 379–404 (SLKTDTVSTSVSGNEPLDDNVDGFHA) constitute a propeptide that is removed on maturation. The segment at 385–404 (VSTSVSGNEPLDDNVDGFHA) is disordered. Residues 394-404 (PLDDNVDGFHA) show a composition bias toward acidic residues.

Monomer. The cofactor is Zn(2+). As to expression, expressed by the venom gland.

The protein resides in the secreted. In terms of biological role, this probable venom zinc protease is not hemorrhagic when 3 ug are injected onto the back skin of guinea pig. This is Snake venom metalloproteinase H5 from Deinagkistrodon acutus (Hundred-pace snake).